The following is a 256-amino-acid chain: Adenosine 5'-phosphosulfate reductase (256 aa).

[4Fe-4S] cluster-binding residues include Cys120, Cys121, Cys203, and Cys206. The active-site Nucleophile; cysteine thiosulfonate intermediate is Cys231.

The protein belongs to the PAPS reductase family. CysH subfamily. [4Fe-4S] cluster is required as a cofactor.

Its subcellular location is the cytoplasm. It carries out the reaction [thioredoxin]-disulfide + sulfite + AMP + 2 H(+) = adenosine 5'-phosphosulfate + [thioredoxin]-dithiol. Its pathway is sulfur metabolism; hydrogen sulfide biosynthesis; sulfite from sulfate. Its function is as follows. Catalyzes the formation of sulfite from adenosine 5'-phosphosulfate (APS) using thioredoxin as an electron donor. This is Adenosine 5'-phosphosulfate reductase from Allochromatium vinosum (strain ATCC 17899 / DSM 180 / NBRC 103801 / NCIMB 10441 / D) (Chromatium vinosum).